The following is a 514-amino-acid chain: Ribonuclease Y (514 aa).

A helical transmembrane segment spans residues 3–23 (VLWMVLGLAIGIAVGAAAGYI). In terms of domain architecture, KH spans 203 to 266 (TVKAVELPSD…EVARIAMERL (64 aa)). In terms of domain architecture, HD spans 330-423 (VLAHSVEVAN…VATADAVSAA (94 aa)).

The protein belongs to the RNase Y family.

It is found in the cell membrane. Its function is as follows. Endoribonuclease that initiates mRNA decay. This Rubrobacter xylanophilus (strain DSM 9941 / JCM 11954 / NBRC 16129 / PRD-1) protein is Ribonuclease Y.